The chain runs to 115 residues: Protachykinin-1 (115 aa).

The signal sequence occupies residues Met1–Ala19. Residues Glu20 to Ala56 constitute a propeptide that is removed on maturation. Residues Met68 and Met92 each carry the methionine amide modification.

It belongs to the tachykinin family. The substance P form is cleaved at Pro-59 by the prolyl endopeptidase FAP (seprase) activity (in vitro). Substance P is also cleaved and degraded by Angiotensin-converting enzyme (ACE) and neprilysin (MME).

The protein localises to the secreted. In terms of biological role, tachykinins are active peptides which excite neurons, evoke behavioral responses, are potent vasodilators and secretagogues, and contract (directly or indirectly) many smooth muscles. This is Protachykinin-1 (TAC1) from Oryctolagus cuniculus (Rabbit).